The sequence spans 197 residues: MDMQSRIRQLFQASIDTKQQAMDVLAPHIEQASQVMVNALLNEGKMLSCGNGGSAGDAQHFSSELLNRFERERPSLPAIALTTDSSTITSIANDYSYNEVFSKQIRALGQPGDVLLAISTSGNSANIIQAIQAAHDREMIVVALTGRDGGGMASLLLPEDVEIRVPANVTARIQEVHLLAIHCLCDLIDSQLFGSEE.

The region spanning 36–197 is the SIS domain; the sequence is MVNALLNEGK…IDSQLFGSEE (162 aa). Substrate is bound at residue 51 to 53; the sequence is NGG. Zn(2+) contacts are provided by H60 and E64. Substrate-binding positions include E64, 93 to 94, 119 to 121, S124, and Q174; these read ND and STS. Zn(2+)-binding residues include Q174 and H182.

Belongs to the SIS family. GmhA subfamily. Homotetramer. Zn(2+) is required as a cofactor.

It is found in the cytoplasm. The catalysed reaction is 2 D-sedoheptulose 7-phosphate = D-glycero-alpha-D-manno-heptose 7-phosphate + D-glycero-beta-D-manno-heptose 7-phosphate. Its pathway is carbohydrate biosynthesis; D-glycero-D-manno-heptose 7-phosphate biosynthesis; D-glycero-alpha-D-manno-heptose 7-phosphate and D-glycero-beta-D-manno-heptose 7-phosphate from sedoheptulose 7-phosphate: step 1/1. Functionally, catalyzes the isomerization of sedoheptulose 7-phosphate in D-glycero-D-manno-heptose 7-phosphate. This is Phosphoheptose isomerase from Pseudomonas fluorescens (strain Pf0-1).